Consider the following 120-residue polypeptide: Large ribosomal subunit protein uL18 (120 aa).

This sequence belongs to the universal ribosomal protein uL18 family. Part of the 50S ribosomal subunit; part of the 5S rRNA/L5/L18/L25 subcomplex. Contacts the 5S and 23S rRNAs.

In terms of biological role, this is one of the proteins that bind and probably mediate the attachment of the 5S RNA into the large ribosomal subunit, where it forms part of the central protuberance. In Geobacillus kaustophilus (strain HTA426), this protein is Large ribosomal subunit protein uL18.